The sequence spans 571 residues: ATP-dependent RNA helicase RhlB (571 aa).

The short motif at 9–37 (VTFSSFDLHPALIAGLESAGFTRCTPIQA) is the Q motif element. In terms of domain architecture, Helicase ATP-binding spans 40–220 (LPVALPGGDV…YEHMNEPEKL (181 aa)). 53-60 (AQTGTGKT) is a binding site for ATP. Positions 166–169 (DEAD) match the DEAD box motif. One can recognise a Helicase C-terminal domain in the interval 231-393 (RVRQRIYFPS…PVTSELLTPL (163 aa)). Residues 391-558 (TPLPRAPRVP…KPSGSPSLLS (168 aa)) are disordered. Residues 402–411 (EGEEADDDAG) show a composition bias toward acidic residues. Basic and acidic residues predominate over residues 419–432 (REAREQRAAEEQRR). Residues 435-448 (GRGGPGGSRSGSGG) show a composition bias toward gly residues. A compositionally biased stretch (basic and acidic residues) spans 449–460 (GRRDGAGADGKP). The span at 483 to 497 (VVAAVAAQAPSAGVA) shows a compositional bias: low complexity. A compositionally biased stretch (basic residues) spans 503 to 512 (PRKRRRRRNG). Low complexity predominate over residues 539 to 558 (VVAKPVRAAAKPSGSPSLLS).

The protein belongs to the DEAD box helicase family. RhlB subfamily. Component of the RNA degradosome, which is a multiprotein complex involved in RNA processing and mRNA degradation.

It is found in the cytoplasm. It carries out the reaction ATP + H2O = ADP + phosphate + H(+). In terms of biological role, DEAD-box RNA helicase involved in RNA degradation. Has RNA-dependent ATPase activity and unwinds double-stranded RNA. This chain is ATP-dependent RNA helicase RhlB, found in Xanthomonas axonopodis pv. citri (strain 306).